The following is a 155-amino-acid chain: Ribosome maturation factor RimP (155 aa).

This sequence belongs to the RimP family.

Its subcellular location is the cytoplasm. Functionally, required for maturation of 30S ribosomal subunits. The chain is Ribosome maturation factor RimP from Prochlorococcus marinus (strain MIT 9312).